Consider the following 182-residue polypeptide: Adenine phosphoribosyltransferase (182 aa).

It belongs to the purine/pyrimidine phosphoribosyltransferase family. As to quaternary structure, homodimer.

Its subcellular location is the cytoplasm. The catalysed reaction is AMP + diphosphate = 5-phospho-alpha-D-ribose 1-diphosphate + adenine. It functions in the pathway purine metabolism; AMP biosynthesis via salvage pathway; AMP from adenine: step 1/1. Its function is as follows. Catalyzes a salvage reaction resulting in the formation of AMP, that is energically less costly than de novo synthesis. The chain is Adenine phosphoribosyltransferase from Saccharopolyspora erythraea (strain ATCC 11635 / DSM 40517 / JCM 4748 / NBRC 13426 / NCIMB 8594 / NRRL 2338).